The sequence spans 433 residues: 4-hydroxy-3-methylbut-2-en-1-yl diphosphate synthase (flavodoxin) (433 aa).

Residues cysteine 320, cysteine 323, cysteine 366, and glutamate 373 each coordinate [4Fe-4S] cluster.

This sequence belongs to the IspG family. Requires [4Fe-4S] cluster as cofactor.

It catalyses the reaction (2E)-4-hydroxy-3-methylbut-2-enyl diphosphate + oxidized [flavodoxin] + H2O + 2 H(+) = 2-C-methyl-D-erythritol 2,4-cyclic diphosphate + reduced [flavodoxin]. It participates in isoprenoid biosynthesis; isopentenyl diphosphate biosynthesis via DXP pathway; isopentenyl diphosphate from 1-deoxy-D-xylulose 5-phosphate: step 5/6. In terms of biological role, converts 2C-methyl-D-erythritol 2,4-cyclodiphosphate (ME-2,4cPP) into 1-hydroxy-2-methyl-2-(E)-butenyl 4-diphosphate. This is 4-hydroxy-3-methylbut-2-en-1-yl diphosphate synthase (flavodoxin) from Beijerinckia indica subsp. indica (strain ATCC 9039 / DSM 1715 / NCIMB 8712).